We begin with the raw amino-acid sequence, 87 residues long: U3-theraphotoxin-Hhn1n (87 aa).

Positions 1 to 24 are cleaved as a signal peptide; sequence MVNMKASMFLTFAGLVLLFVVCYA. Residues 25-52 constitute a propeptide that is removed on maturation; sequence SESEEKEFPKEMLSSIFAVDNDFKQEER. 3 disulfide bridges follow: C54-C67, C61-C72, and C66-C79.

It belongs to the neurotoxin 10 (Hwtx-1) family. 51 (Hntx-8) subfamily. Hntx-8 sub-subfamily. As to expression, expressed by the venom gland.

Its subcellular location is the secreted. In terms of biological role, weakly inhibits Kv11.1/KCNH2/ERG1, Kv1.2/KCNA2, Kv1.3/KCNA3, and Kv2.1/KCNB1. The protein is U3-theraphotoxin-Hhn1n of Cyriopagopus hainanus (Chinese bird spider).